The chain runs to 361 residues: Deoxyribonuclease (361 aa).

An N-terminal signal peptide occupies residues 1 to 24; it reads MMHLLRRGAFAILLIVLLPSAALA. Residue His149 is part of the active site.

The protein belongs to the DNase I family. It depends on Mg(2+) as a cofactor. Ca(2+) serves as cofactor.

Its subcellular location is the secreted. Functionally, DNA nuclease able to digest short and long DNA substrate. Is resistant to ionic strength and thus active at high salt concentration. This chain is Deoxyribonuclease, found in Thioalkalivibrio sp. (strain K90mix).